A 354-amino-acid polypeptide reads, in one-letter code: Hyaluronan and proteoglycan link protein 1 (354 aa).

Residues 1–15 (MKSLLLLVLISFCWA) constitute a propeptide that is removed on maturation. 2 N-linked (GlcNAc...) asparagine glycosylation sites follow: asparagine 21 and asparagine 56. The 115-residue stretch at 38–152 (PRLLVEAEQA…EGLEDDTAVV (115 aa)) folds into the Ig-like V-type domain. Cystine bridges form between cysteine 61/cysteine 139, cysteine 181/cysteine 252, cysteine 205/cysteine 226, cysteine 279/cysteine 349, and cysteine 304/cysteine 325. 2 Link domains span residues 159 to 254 (VVFP…FCFT) and 259 to 351 (GRFY…YCFR).

The protein belongs to the HAPLN family.

The protein resides in the secreted. Its subcellular location is the extracellular space. The protein localises to the extracellular matrix. In terms of biological role, stabilizes the aggregates of proteoglycan monomers with hyaluronic acid in the extracellular cartilage matrix. This is Hyaluronan and proteoglycan link protein 1 (HAPLN1) from Bos taurus (Bovine).